Consider the following 84-residue polypeptide: Toxin Acra3 (84 aa).

A signal peptide spans 1–17 (MKIIFLVLMMILSEVYS). One can recognise an LCN-type CS-alpha/beta domain in the interval 19–82 (RDGYPVHDGT…VYGDDGIFCK (64 aa)). Cystine bridges form between Cys30/Cys81, Cys34/Cys57, Cys43/Cys62, and Cys47/Cys64. Position 83 is a serine amide (Ser83).

The protein belongs to the long (4 C-C) scorpion toxin superfamily. Sodium channel inhibitor family. Beta subfamily. In terms of tissue distribution, expressed by the venom gland.

It localises to the secreted. In terms of biological role, toxin with unknown target. In vivo, induces severe neurotoxic events in mice such as excitability and convulsions, leading to the death of the animals within a few minutes after injection. Exerts very strong cytotoxic effect on a mouse brain tumor cell line (BC3H1) (IC(50)=5 mg/ml). It exerts its effects by inducing a stronger necrosis than apoptosis in BC3H1 cells. The polypeptide is Toxin Acra3 (Androctonus crassicauda (Arabian fat-tailed scorpion)).